The sequence spans 127 residues: Cyclin-dependent protein kinase inhibitor SIM (127 aa).

The disordered stretch occupies residues Arg21 to Ser71. The span at Thr50–Thr63 shows a compositional bias: pro residues.

In terms of assembly, interacts with CDKA-1. Interacts with CYCD2-1, CYCD3-2 and CYCD4-1. Interacts with CDKB1-1. Interacts with CPR5. In terms of tissue distribution, expressed in the shoot apical meristem, leaf primordia and the elongation zone of the root.

The protein localises to the nucleus. Functionally, cyclin-dependent protein kinase (CDK) inhibitor that functions as a repressor of mitosis in the endoreduplication cell cycle. Inhibits the kinase activity of CYCD3-1/CDKA-1, CYCD2-1/CDKA-1 and CYCB1-1/CDKB1-1 complexes in a dose dependent manner. Cooperates with SMR1 and SMR2 to promote endoreplication during leaf development. Required for normal trichome endoreplicating cell cycles. Positive regulator of effector-triggered immunity (ETI). This chain is Cyclin-dependent protein kinase inhibitor SIM, found in Arabidopsis thaliana (Mouse-ear cress).